The sequence spans 512 residues: Serine/threonine-protein kinase SSN3 (512 aa).

Disordered regions lie at residues Met1–Trp22 and Ala75–Met94. A Protein kinase domain is found at Tyr106–Phe455. ATP is bound by residues Ile112–Val120 and Lys136. Asp238 functions as the Proton acceptor in the catalytic mechanism. Disordered regions lie at residues Gln368 to Ala388 and Arg476 to Gly512. The span at His373–Gln382 shows a compositional bias: basic residues. Basic and acidic residues-rich tracts occupy residues Arg476–Ile485 and Gly497–Gly512.

Belongs to the protein kinase superfamily. CMGC Ser/Thr protein kinase family. CDC2/CDKX subfamily. In terms of assembly, component of the SRB8-11 complex, a regulatory module of the Mediator complex. Mg(2+) is required as a cofactor.

It is found in the nucleus. The catalysed reaction is L-seryl-[protein] + ATP = O-phospho-L-seryl-[protein] + ADP + H(+). The enzyme catalyses L-threonyl-[protein] + ATP = O-phospho-L-threonyl-[protein] + ADP + H(+). It carries out the reaction [DNA-directed RNA polymerase] + ATP = phospho-[DNA-directed RNA polymerase] + ADP + H(+). In terms of biological role, component of the SRB8-11 complex. The SRB8-11 complex is a regulatory module of the Mediator complex which is itself involved in regulation of basal and activated RNA polymerase II-dependent transcription. The SRB8-11 complex may be involved in the transcriptional repression of a subset of genes regulated by Mediator. It may inhibit the association of the Mediator complex with RNA polymerase II to form the holoenzyme complex. The SRB8-11 complex phosphorylates the C-terminal domain (CTD) of the largest subunit of RNA polymerase II. The polypeptide is Serine/threonine-protein kinase SSN3 (SSN3) (Chaetomium globosum (strain ATCC 6205 / CBS 148.51 / DSM 1962 / NBRC 6347 / NRRL 1970) (Soil fungus)).